The primary structure comprises 682 residues: Glucan endo-1,3-beta-glucosidase A1 (682 aa).

Positions 1-38 (MKPSHFTEKRFMKKVLGLFLVVVMLASVGVLPTSKVQA) are cleaved as a signal peptide. Positions 391-682 (YTFIGNPNAP…VDYVRVYKEQ (292 aa)) constitute a GH16 domain. The Nucleophile role is filled by Glu552. Glu557 acts as the Proton donor in catalysis.

The protein belongs to the glycosyl hydrolase 16 family.

The protein resides in the secreted. The catalysed reaction is Hydrolysis of (1-&gt;3)-beta-D-glucosidic linkages in (1-&gt;3)-beta-D-glucans.. Its function is as follows. Lysis of cellular walls containing beta-1,3-glucans. Implicated in the defense against fungal pathogens. This Niallia circulans (Bacillus circulans) protein is Glucan endo-1,3-beta-glucosidase A1 (glcA).